Here is a 120-residue protein sequence, read N- to C-terminus: Large ribosomal subunit protein uL18 (120 aa).

This sequence belongs to the universal ribosomal protein uL18 family. In terms of assembly, part of the 50S ribosomal subunit; part of the 5S rRNA/L5/L18/L25 subcomplex. Contacts the 5S and 23S rRNAs.

Its function is as follows. This is one of the proteins that bind and probably mediate the attachment of the 5S RNA into the large ribosomal subunit, where it forms part of the central protuberance. This chain is Large ribosomal subunit protein uL18, found in Staphylococcus carnosus (strain TM300).